Reading from the N-terminus, the 312-residue chain is tRNA-cytidine(32) 2-sulfurtransferase (312 aa).

The PP-loop motif motif lies at 48–53 (SGGKDS). Positions 123, 126, and 214 each coordinate [4Fe-4S] cluster.

This sequence belongs to the TtcA family. In terms of assembly, homodimer. Mg(2+) is required as a cofactor. [4Fe-4S] cluster serves as cofactor.

The protein resides in the cytoplasm. It catalyses the reaction cytidine(32) in tRNA + S-sulfanyl-L-cysteinyl-[cysteine desulfurase] + AH2 + ATP = 2-thiocytidine(32) in tRNA + L-cysteinyl-[cysteine desulfurase] + A + AMP + diphosphate + H(+). It participates in tRNA modification. In terms of biological role, catalyzes the ATP-dependent 2-thiolation of cytidine in position 32 of tRNA, to form 2-thiocytidine (s(2)C32). The sulfur atoms are provided by the cysteine/cysteine desulfurase (IscS) system. The sequence is that of tRNA-cytidine(32) 2-sulfurtransferase from Mannheimia succiniciproducens (strain KCTC 0769BP / MBEL55E).